The chain runs to 95 residues: UPF0473 protein ABC1595 (95 aa).

The protein belongs to the UPF0473 family.

The protein is UPF0473 protein ABC1595 of Shouchella clausii (strain KSM-K16) (Alkalihalobacillus clausii).